A 305-amino-acid polypeptide reads, in one-letter code: UDP-3-O-acyl-N-acetylglucosamine deacetylase (305 aa).

3 residues coordinate Zn(2+): H79, H238, and D242. H265 functions as the Proton donor in the catalytic mechanism.

The protein belongs to the LpxC family. It depends on Zn(2+) as a cofactor.

It carries out the reaction a UDP-3-O-[(3R)-3-hydroxyacyl]-N-acetyl-alpha-D-glucosamine + H2O = a UDP-3-O-[(3R)-3-hydroxyacyl]-alpha-D-glucosamine + acetate. It functions in the pathway glycolipid biosynthesis; lipid IV(A) biosynthesis; lipid IV(A) from (3R)-3-hydroxytetradecanoyl-[acyl-carrier-protein] and UDP-N-acetyl-alpha-D-glucosamine: step 2/6. In terms of biological role, catalyzes the hydrolysis of UDP-3-O-myristoyl-N-acetylglucosamine to form UDP-3-O-myristoylglucosamine and acetate, the committed step in lipid A biosynthesis. This is UDP-3-O-acyl-N-acetylglucosamine deacetylase from Cronobacter sakazakii (strain ATCC BAA-894) (Enterobacter sakazakii).